A 370-amino-acid chain; its full sequence is Cathepsin B-like cysteine proteinase 3 (370 aa).

The N-terminal stretch at 1-16 is a signal peptide; the sequence is MLKVYFLALFLAGCSA. Residues 17-91 constitute a propeptide that is removed on maturation; it reads FVLDEIRGIN…FVRGEIVPEP (75 aa). Intrachain disulfides connect Cys-105–Cys-134, Cys-117–Cys-162, Cys-153–Cys-210, Cys-154–Cys-158, Cys-190–Cys-214, and Cys-198–Cys-202. Cys-120 is an active-site residue. Asn-138 carries an N-linked (GlcNAc...) asparagine glycan. Active-site residues include His-284 and Asn-304.

The protein belongs to the peptidase C1 family.

This is Cathepsin B-like cysteine proteinase 3 (cpr-3) from Caenorhabditis elegans.